Consider the following 110-residue polypeptide: Ig kappa chain V region 2717 (110 aa).

Residues 1 to 23 (VEVLTQTPSPVSAAVGGTVTISC) form a framework-1 region. A complementarity-determining-1 region spans residues 24–36 (QSTKSIYBBBYLA). The segment at 37–51 (WYQZKPGQPPKALIY) is framework-2. Positions 52–58 (TASSLAS) are complementarity-determining-2. The tract at residues 59 to 90 (GVPSRFTGSGSGTZFTLTLSDVZCDDAATYYC) is framework-3. The complementarity-determining-3 stretch occupies residues 91 to 99 (GGADYTGYS). Positions 100–109 (FGGGTEVVVK) are framework-4.

This Oryctolagus cuniculus (Rabbit) protein is Ig kappa chain V region 2717.